The sequence spans 300 residues: Pantothenate synthetase (300 aa).

30–37 (MGYLHEGH) lines the ATP pocket. His-37 functions as the Proton donor in the catalytic mechanism. A (R)-pantoate-binding site is contributed by Gln-61. Residue Gln-61 coordinates beta-alanine. Residue 147–150 (GMKD) participates in ATP binding. A (R)-pantoate-binding site is contributed by Gln-153. Residues Val-176 and 184-187 (KSSR) each bind ATP.

It belongs to the pantothenate synthetase family. Homodimer.

It is found in the cytoplasm. The catalysed reaction is (R)-pantoate + beta-alanine + ATP = (R)-pantothenate + AMP + diphosphate + H(+). Its pathway is cofactor biosynthesis; (R)-pantothenate biosynthesis; (R)-pantothenate from (R)-pantoate and beta-alanine: step 1/1. Catalyzes the condensation of pantoate with beta-alanine in an ATP-dependent reaction via a pantoyl-adenylate intermediate. The sequence is that of Pantothenate synthetase from Geobacillus kaustophilus (strain HTA426).